We begin with the raw amino-acid sequence, 443 residues long: Crh-like protein 2 (443 aa).

The N-terminal stretch at 1–20 is a signal peptide; that stretch reads MVRIGSSLLLATLAATTVSA. Residues 21 to 306 enclose the GH16 domain; sequence ASDPPKCSQD…TVECYDPPSG (286 aa). Residues cysteine 56 and cysteine 67 are joined by a disulfide bond. The active-site Nucleophile is the glutamate 164. The active-site Proton donor is the glutamate 168. Glutamate 168 contacts chitin. Residues asparagine 194 and asparagine 237 are each glycosylated (N-linked (GlcNAc...) asparagine). 2 residues coordinate chitin: tryptophan 257 and threonine 268. Asparagine 332 and asparagine 359 each carry an N-linked (GlcNAc...) asparagine glycan. Low complexity-rich tracts occupy residues 350–367 and 378–410; these read ASSS…SANT and EPGN…SETS. The disordered stretch occupies residues 350 to 420; that stretch reads ASSSASGSAN…ASSNKNAAPS (71 aa). Over residues 411–420 the composition is skewed to polar residues; it reads ASSNKNAAPS. Residue asparagine 416 is the site of GPI-like-anchor amidated asparagine attachment. The propeptide at 417–443 is removed in mature form; the sequence is AAPSQNERVLNGSFFAVLVAVVALVTL. Asparagine 427 is a glycosylation site (N-linked (GlcNAc...) asparagine).

It belongs to the glycosyl hydrolase 16 family. CRH1 subfamily. Post-translationally, the GPI-like anchor contains a phosphoceramide lipid group. The anchor position has not been determined.

It localises to the cell membrane. The protein resides in the secreted. The protein localises to the cell wall. The catalysed reaction is Random endo-hydrolysis of N-acetyl-beta-D-glucosaminide (1-&gt;4)-beta-linkages in chitin and chitodextrins.. Dual chitinase/transglycosylase that plays a role in cell wall architecture. Chitinase and transglycosylase activities are coupled. Required for the polysaccharide cross-linking at the septa and the cell wall. More specifically, transfers chitin to 1,6-beta-glucan in the cell wall. This is Crh-like protein 2 from Aspergillus fumigatus (strain ATCC MYA-4609 / CBS 101355 / FGSC A1100 / Af293) (Neosartorya fumigata).